Here is a 381-residue protein sequence, read N- to C-terminus: uncharacterized protein (381 aa).

Residues 331–340 show a composition bias toward polar residues; sequence MQNGYANNGR. Residues 331–381 form a disordered region; that stretch reads MQNGYANNGRNHQRERFERPEKNSKKNKFLPFNGSNKEKKRDKLKKNCVIM. A compositionally biased stretch (basic and acidic residues) spans 342 to 354; that stretch reads HQRERFERPEKNS. Residues 372–381 show a composition bias toward basic residues; that stretch reads DKLKKNCVIM.

The protein localises to the cytoplasm. Its subcellular location is the nucleus. This is an uncharacterized protein from Saccharomyces cerevisiae (strain ATCC 204508 / S288c) (Baker's yeast).